The chain runs to 253 residues: 5'/3'-nucleotidase SurE (253 aa).

A divalent metal cation is bound by residues Asp8, Asp9, Ser39, and Asn92.

It belongs to the SurE nucleotidase family. The cofactor is a divalent metal cation.

The protein localises to the cytoplasm. It catalyses the reaction a ribonucleoside 5'-phosphate + H2O = a ribonucleoside + phosphate. The enzyme catalyses a ribonucleoside 3'-phosphate + H2O = a ribonucleoside + phosphate. It carries out the reaction [phosphate](n) + H2O = [phosphate](n-1) + phosphate + H(+). Nucleotidase with a broad substrate specificity as it can dephosphorylate various ribo- and deoxyribonucleoside 5'-monophosphates and ribonucleoside 3'-monophosphates with highest affinity to 3'-AMP. Also hydrolyzes polyphosphate (exopolyphosphatase activity) with the preference for short-chain-length substrates (P20-25). Might be involved in the regulation of dNTP and NTP pools, and in the turnover of 3'-mononucleotides produced by numerous intracellular RNases (T1, T2, and F) during the degradation of various RNAs. The chain is 5'/3'-nucleotidase SurE from Cronobacter sakazakii (strain ATCC BAA-894) (Enterobacter sakazakii).